A 318-amino-acid polypeptide reads, in one-letter code: NADH-ubiquinone oxidoreductase chain 1 (318 aa).

8 helical membrane passes run 2–22 (FMVN…FLTL), 76–96 (TLAL…HPLI), 98–118 (FNLG…SILW), 140–160 (ISYE…SGSF), 171–191 (HSWL…STLA), 217–237 (AGSF…MNAL), 253–273 (ELYT…FLWI), and 294–314 (LPLT…TSGI).

This sequence belongs to the complex I subunit 1 family. In terms of assembly, core subunit of respiratory chain NADH dehydrogenase (Complex I) which is composed of 45 different subunits.

It localises to the mitochondrion inner membrane. It carries out the reaction a ubiquinone + NADH + 5 H(+)(in) = a ubiquinol + NAD(+) + 4 H(+)(out). Core subunit of the mitochondrial membrane respiratory chain NADH dehydrogenase (Complex I) which catalyzes electron transfer from NADH through the respiratory chain, using ubiquinone as an electron acceptor. Essential for the catalytic activity and assembly of complex I. The sequence is that of NADH-ubiquinone oxidoreductase chain 1 (MT-ND1) from Ateles paniscus (Black spider monkey).